Here is a 902-residue protein sequence, read N- to C-terminus: Cytosolic 10-formyltetrahydrofolate dehydrogenase (902 aa).

The hydrolase domain stretch occupies residues 1–310 (MKIAVIGQSL…LASNFFKGAA (310 aa)). A Phosphoserine modification is found at Ser9. Residue Lys38 is modified to N6-succinyllysine. Residue 88-90 (QFI) coordinates (6R)-10-formyltetrahydrofolate. The active-site Proton donor is the His106. Residue Asp142 participates in (6R)-10-formyltetrahydrofolate binding. Positions 318–395 (EAELVTAEAV…DFIQLLVRKL (78 aa)) constitute a Carrier domain. At Ser354 the chain carries O-(pantetheine 4'-phosphoryl)serine. The interval 417 to 902 (TIRIPHQLFI…LRVKTVTFEY (486 aa)) is aldehyde dehydrogenase domain. NADP(+) contacts are provided by residues 571 to 573 (IPW) and 597 to 600 (KPAQ). Phosphoserine occurs at positions 629 and 631. Residues 630–635 (GSLVGQ) and 650–651 (GS) each bind NADP(+). Lys660 is subject to N6-succinyllysine. The active-site Proton acceptor is Glu673. 673–674 (EL) serves as a coordination point for NADP(+). Cys707 (proton donor) is an active-site residue. Lys757 serves as a coordination point for NADP(+). Residue Lys767 is modified to N6-succinyllysine. Residue 804-806 (ESF) coordinates NADP(+). A Phosphoserine modification is found at Ser825. Lys882 bears the N6-acetyllysine mark.

This sequence in the N-terminal section; belongs to the GART family. In the C-terminal section; belongs to the aldehyde dehydrogenase family. ALDH1L subfamily. In terms of assembly, homotetramer. In terms of processing, phosphopantetheinylation at Ser-354 by AASDHPPT is required for the formyltetrahydrofolate dehydrogenase activity.

It is found in the cytoplasm. The protein localises to the cytosol. The catalysed reaction is (6R)-10-formyltetrahydrofolate + NADP(+) + H2O = (6S)-5,6,7,8-tetrahydrofolate + CO2 + NADPH + H(+). Its function is as follows. Cytosolic 10-formyltetrahydrofolate dehydrogenase that catalyzes the NADP(+)-dependent conversion of 10-formyltetrahydrofolate to tetrahydrofolate and carbon dioxide. May also have an NADP(+)-dependent aldehyde dehydrogenase activity towards formaldehyde, acetaldehyde, propionaldehyde, and benzaldehyde. This chain is Cytosolic 10-formyltetrahydrofolate dehydrogenase, found in Pongo abelii (Sumatran orangutan).